A 163-amino-acid polypeptide reads, in one-letter code: Cyanate hydratase (163 aa).

Active-site residues include R103, E106, and S129.

This sequence belongs to the cyanase family.

It carries out the reaction cyanate + hydrogencarbonate + 3 H(+) = NH4(+) + 2 CO2. Catalyzes the reaction of cyanate with bicarbonate to produce ammonia and carbon dioxide. The polypeptide is Cyanate hydratase (Talaromyces stipitatus (strain ATCC 10500 / CBS 375.48 / QM 6759 / NRRL 1006) (Penicillium stipitatum)).